Consider the following 451-residue polypeptide: uncharacterized protein (451 aa).

A run of 5 helical transmembrane segments spans residues 11-31, 56-76, 151-171, 175-195, and 207-227; these read VLLKLIQILFFTISISIYIDL, IQIYYWFVGIILFSIAWSIGT, IIGIQSCLIIFFSTLGFNIYL, FWLIKTIIVDWIISAILLIIF, and VYSVISYIFGSNVLGFGTIKI. Residues 250–300 form a disordered region; that stretch reads TKSNNNNNNNNNNKQDDNIIYDTDSSFNGQSSSSSSSSSSSSSSSSSATTT. Low complexity-rich tracts occupy residues 253–262 and 280–300; these read NNNNNNNNNN and SSSSSSSSSSSSSSSSSATTT. Transmembrane regions (helical) follow at residues 392–412 and 413–433; these read FVGVIILWVYTISNFIISDYS and LLTIPNILVVVGFSGTILTYL.

It localises to the membrane. This is an uncharacterized protein from Dictyostelium discoideum (Social amoeba).